Here is a 298-residue protein sequence, read N- to C-terminus: Phosphatidylglycerol--prolipoprotein diacylglyceryl transferase (298 aa).

7 consecutive transmembrane segments (helical) span residues 17–37 (LAVRWYGLMYLVGFIAAIVVG), 59–79 (MMFYGVLGTVLGGRLGYVLFY), 97–117 (GGMSFHGGFLGVTLAMMLFAW), 129–149 (FVAPMVPLGLAAGRLGNFING), 204–224 (SQLYEIALEGIALFFVLFLFA), 230–250 (MGAISALFLIGYGLARFTVEF), and 257–277 (FLGLLALGLSMGQWLSLPMIL). Arg-142 provides a ligand contact to a 1,2-diacyl-sn-glycero-3-phospho-(1'-sn-glycerol).

It belongs to the Lgt family.

Its subcellular location is the cell inner membrane. It carries out the reaction L-cysteinyl-[prolipoprotein] + a 1,2-diacyl-sn-glycero-3-phospho-(1'-sn-glycerol) = an S-1,2-diacyl-sn-glyceryl-L-cysteinyl-[prolipoprotein] + sn-glycerol 1-phosphate + H(+). Its pathway is protein modification; lipoprotein biosynthesis (diacylglyceryl transfer). Its function is as follows. Catalyzes the transfer of the diacylglyceryl group from phosphatidylglycerol to the sulfhydryl group of the N-terminal cysteine of a prolipoprotein, the first step in the formation of mature lipoproteins. The polypeptide is Phosphatidylglycerol--prolipoprotein diacylglyceryl transferase (Burkholderia orbicola (strain MC0-3)).